A 511-amino-acid chain; its full sequence is GMP synthase [glutamine-hydrolyzing] (511 aa).

Positions A5–N195 constitute a Glutamine amidotransferase type-1 domain. The Nucleophile role is filled by C82. Active-site residues include H169 and E171. Residues W196–R386 enclose the GMPS ATP-PPase domain. S223 to L229 contacts ATP.

In terms of assembly, homodimer.

It catalyses the reaction XMP + L-glutamine + ATP + H2O = GMP + L-glutamate + AMP + diphosphate + 2 H(+). The protein operates within purine metabolism; GMP biosynthesis; GMP from XMP (L-Gln route): step 1/1. Functionally, catalyzes the synthesis of GMP from XMP. This is GMP synthase [glutamine-hydrolyzing] (guaA) from Borreliella burgdorferi (strain ATCC 35210 / DSM 4680 / CIP 102532 / B31) (Borrelia burgdorferi).